The following is a 140-amino-acid chain: Histone H3-like centromeric protein A (140 aa).

A disordered region spans residues 1–46; it reads MGPRRRSRKPEAPRRRSPSPTPTPGPSRRGPSLGASSHQHSRRRQG. N,N,N-trimethylglycine is present on glycine 2. Serine 7 carries the phosphoserine; by AURKA and AURKB modification. Phosphoserine occurs at positions 17, 19, and 27. A compositionally biased stretch (low complexity) spans 26–37; that stretch reads PSRRGPSLGASS. The interval 39 to 54 is important for flexibility of DNA ends that protrude from nucleosomes; it reads QHSRRRQGWLKEIRKL. Serine 68 carries the post-translational modification Phosphoserine. The tract at residues 75-116 is CATD; the sequence is CVKFTRGVDFNWQAQALLALQEAAEAFLVHLFEDAYLLTLHA.

The protein belongs to the histone H3 family. As to quaternary structure, component of centromeric nucleosomes, where DNA is wrapped around a histone octamer core. The octamer contains two molecules each of H2A, H2B, CENPA and H4 assembled in one CENPA-H4 heterotetramer and two H2A-H2B heterodimers. CENPA modulates the DNA-binding characteristics of nucleosomes so that protruding DNA ends have higher flexibility than in nucleosomes containing conventional histone H3. Inhibits binding of histone H1 to nucleosomes, since histone H1 binds preferentially to rigid DNA linkers that protrude from nucleosomes. Nucleosomes containing CENPA also contain histone H2A variants such as MACROH2A and H2A.Z/H2AZ1. The CENPA-H4 heterotetramer is more compact and structurally more rigid than corresponding H3-H4 heterotetramers. Can assemble into nucleosomes that contain both CENPA and histone H3.3; these nucleosomes interact with a single CENPC chain. Heterotrimer composed of HJURP, CENPA and histone H4, where HJURP interacts with the dimer formed by CENPA and histone H4 and prevents tetramerization of CENPA and H4. Component of the CENPA-NAC complex, at least composed of CENPA, CENPC, CENPH, CENPM, CENPN, CENPT and CENPU. Interacts (via CATD domain) with HJURP; the interaction is direct and is required for its localization to centromeres. Interacts with CENPC, CENPN and CENPT; interaction is direct. Part of a centromere complex consisting of CENPA, CENPT and CENPW. Identified in centromere complexes containing histones H2A, H2B and H4, and at least CENPA, CENPB, CENPC, CENPT, CENPN, HJURP, SUPT16H, SSRP1 and RSF1. Can self-associate. The CENPA-H4 heterotetramer can bind DNA by itself (in vitro). Interacts with CDK1, PPP1CA and RBBP7. In terms of assembly, (Microbial infection) Interacts directly with herpes virus HHV-1 protein ICP0. Ubiquitinated. Interaction with herpes virus HSV-1 ICP0 protein, leads to its degradation by the proteasome pathway. In terms of processing, trimethylated by NTMT1 at the N-terminal glycine after cleavage of Met-1. Methylation is low before incorporation into nucleosomes and increases with cell cycle progression, with the highest levels in mitotic nucleosomes. Post-translationally, phosphorylated by CDK1 at Ser-68 during early mitosis; this abolishes association with chromatin and centromeres, prevents interaction with HJURP and thereby prevents premature assembly of CENPA into centromeres. Dephosphorylated at Ser-68 by PPP1CA during late mitosis. Phosphorylation of Ser-7 by AURKA and AURKB during prophase is required for localization of AURKA and AURKB at inner centromere and is essential for normal cytokinesis. Initial phosphorylation during prophase is mediated by AURKA and is maintained by AURKB. Poly-ADP-ribosylated by PARP1.

Its subcellular location is the nucleus. The protein resides in the chromosome. It localises to the centromere. Histone H3-like nucleosomal protein that is specifically found in centromeric nucleosomes. Replaces conventional H3 in the nucleosome core of centromeric chromatin that serves as an assembly site for the inner kinetochore. The presence of CENPA subtly modifies the nucleosome structure and the way DNA is wrapped around the nucleosome and gives rise to protruding DNA ends that are less well-ordered and rigid compared to nucleosomes containing histone H3. May serve as an epigenetic mark that propagates centromere identity through replication and cell division. Required for recruitment and assembly of kinetochore proteins, and as a consequence required for progress through mitosis, chromosome segregation and cytokinesis. The chain is Histone H3-like centromeric protein A (CENPA) from Homo sapiens (Human).